The following is a 328-amino-acid chain: Malate dehydrogenase (328 aa).

11–17 (GAAGQIG) contributes to the NAD(+) binding site. Residues R94 and R100 each coordinate substrate. Residues N107, Q114, and 131 to 133 (VGN) each bind NAD(+). Residues N133 and R164 each coordinate substrate. Catalysis depends on H189, which acts as the Proton acceptor.

Belongs to the LDH/MDH superfamily. MDH type 2 family.

The catalysed reaction is (S)-malate + NAD(+) = oxaloacetate + NADH + H(+). Its function is as follows. Catalyzes the reversible oxidation of malate to oxaloacetate. In Stenotrophomonas maltophilia (strain K279a), this protein is Malate dehydrogenase.